A 119-amino-acid chain; its full sequence is Large ribosomal subunit protein eL8 (119 aa).

Belongs to the eukaryotic ribosomal protein eL8 family. As to quaternary structure, part of the 50S ribosomal subunit. Probably part of the RNase P complex.

The protein localises to the cytoplasm. In terms of biological role, multifunctional RNA-binding protein that recognizes the K-turn motif in ribosomal RNA, the RNA component of RNase P, box H/ACA, box C/D and box C'/D' sRNAs. This is Large ribosomal subunit protein eL8 from Archaeoglobus fulgidus (strain ATCC 49558 / DSM 4304 / JCM 9628 / NBRC 100126 / VC-16).